A 492-amino-acid polypeptide reads, in one-letter code: Peptidyl-prolyl cis-trans isomerase-like 4 (492 aa).

Residues 1–161 (MAVLLETTLG…QDIRINHTVI (161 aa)) form the PPIase cyclophilin-type domain. The tract at residues 167-188 (DDPPDLLIPDRSPEPTKEQLDS) is disordered. Residues 177–187 (RSPEPTKEQLD) are compositionally biased toward basic and acidic residues. S178 bears the Phosphoserine mark. T182 carries the phosphothreonine modification. Residues K201, K212, and K218 each participate in a glycyl lysine isopeptide (Lys-Gly) (interchain with G-Cter in SUMO2) cross-link. The region spanning 240 to 318 (NVLFVCKLNP…RRIHVDFSQS (79 aa)) is the RRM domain. Residues K321 and K362 each participate in a glycyl lysine isopeptide (Lys-Gly) (interchain with G-Cter in SUMO2) cross-link. Disordered stretches follow at residues 368–409 (DEQG…NPNQ) and 423–492 (EESC…SKYR). Over residues 377-390 (SHSHTSKKHKKKTR) the composition is skewed to basic residues. S393 is subject to Phosphoserine. K405 participates in a covalent cross-link: Glycyl lysine isopeptide (Lys-Gly) (interchain with G-Cter in SUMO2). Residues 426–436 (CWEKQKNEKRD) are compositionally biased toward basic and acidic residues. K460 participates in a covalent cross-link: Glycyl lysine isopeptide (Lys-Gly) (interchain with G-Cter in SUMO2). S471 carries the post-translational modification Phosphoserine. Over residues 473-485 (KRDRSRSPKKSKA) the composition is skewed to basic residues.

Belongs to the cyclophilin-type PPIase family. PPIL4 subfamily.

The protein resides in the nucleus. The enzyme catalyses [protein]-peptidylproline (omega=180) = [protein]-peptidylproline (omega=0). In terms of biological role, PPIases accelerate the folding of proteins. It catalyzes the cis-trans isomerization of proline imidic peptide bonds in oligopeptides. The protein is Peptidyl-prolyl cis-trans isomerase-like 4 (Ppil4) of Mus musculus (Mouse).